Here is a 497-residue protein sequence, read N- to C-terminus: tRNA-2-methylthio-N(6)-dimethylallyladenosine synthase (497 aa).

The MTTase N-terminal domain occupies 4–120 (RSYEVRTFGC…LPVLLERARH (117 aa)). [4Fe-4S] cluster is bound by residues cysteine 13, cysteine 49, cysteine 83, cysteine 157, cysteine 161, and cysteine 164. The Radical SAM core domain occupies 143-374 (RASHHSAWVS…ALQDEVSWAQ (232 aa)). Positions 376–445 (RELVGRRVEL…PHHLTADGPL (70 aa)) constitute a TRAM domain.

It belongs to the methylthiotransferase family. MiaB subfamily. Monomer. [4Fe-4S] cluster is required as a cofactor.

It is found in the cytoplasm. It catalyses the reaction N(6)-dimethylallyladenosine(37) in tRNA + (sulfur carrier)-SH + AH2 + 2 S-adenosyl-L-methionine = 2-methylsulfanyl-N(6)-dimethylallyladenosine(37) in tRNA + (sulfur carrier)-H + 5'-deoxyadenosine + L-methionine + A + S-adenosyl-L-homocysteine + 2 H(+). In terms of biological role, catalyzes the methylthiolation of N6-(dimethylallyl)adenosine (i(6)A), leading to the formation of 2-methylthio-N6-(dimethylallyl)adenosine (ms(2)i(6)A) at position 37 in tRNAs that read codons beginning with uridine. This Frankia alni (strain DSM 45986 / CECT 9034 / ACN14a) protein is tRNA-2-methylthio-N(6)-dimethylallyladenosine synthase.